The primary structure comprises 185 residues: Ribosome-recycling factor (185 aa).

The protein belongs to the RRF family.

It localises to the cytoplasm. Functionally, responsible for the release of ribosomes from messenger RNA at the termination of protein biosynthesis. May increase the efficiency of translation by recycling ribosomes from one round of translation to another. The polypeptide is Ribosome-recycling factor (Desulfatibacillum aliphaticivorans).